Consider the following 246-residue polypeptide: Sortase B (246 aa).

A helical membrane pass occupies residues 5–24 (SFLGKSLTLVVLGVFLFSGW).

Belongs to the bacterial sortase family. Class B subfamily.

The protein resides in the cell membrane. In terms of biological role, transpeptidase that anchors surface proteins to the cell wall. Recognizes and modifies its substrate by proteolytic cleavage of a C-terminal sorting signal. Following cleavage, a covalent intermediate is formed via a thioester bond between the sortase and its substrate, which is then transferred and covalently attached to the cell wall. Catalyzes a cell wall sorting reaction in which a surface protein with the consensus sorting signal NP(Q/K)(T/S)(N/G/S)(D/A) is cleaved between the fourth and fifth residues, and the fourth position is linked to the cell wall. This is not the major sortase in Listeria, it seems to anchor only 2 proteins, Hbp2 (SvpA) and Hbp1. The sequence is that of Sortase B from Listeria monocytogenes serovar 1/2a (strain ATCC BAA-679 / EGD-e).